The sequence spans 135 residues: Large ribosomal subunit protein uL16c (135 aa).

It belongs to the universal ribosomal protein uL16 family. As to quaternary structure, part of the 50S ribosomal subunit.

Its subcellular location is the plastid. The protein resides in the chloroplast. The protein is Large ribosomal subunit protein uL16c of Panax ginseng (Korean ginseng).